The chain runs to 1040 residues: Multidrug resistance protein MdtB (1040 aa).

12 helical membrane-spanning segments follow: residues 16–36 (FIMR…AGII), 347–367 (LMMA…NIPA), 369–389 (IIPG…MVFL), 396–416 (LTLM…IVVI), 440–460 (IGFT…PLLF), 472–492 (FAIT…TLTP), 537–557 (WLTL…WVFI), 863–883 (LGST…VLGI), 888–908 (FIHP…ALLA), 911–931 (IAGS…IGIV), 968–988 (ILMT…STGV), and 998–1018 (IGMV…TPVI).

Belongs to the resistance-nodulation-cell division (RND) (TC 2.A.6) family. MdtB subfamily. As to quaternary structure, part of a tripartite efflux system composed of MdtA, MdtB and MdtC. MdtB forms a heteromultimer with MdtC.

It is found in the cell inner membrane. In terms of biological role, the MdtABC tripartite complex confers resistance against novobiocin and deoxycholate. The polypeptide is Multidrug resistance protein MdtB (Escherichia coli O8 (strain IAI1)).